Consider the following 983-residue polypeptide: Bifunctional glutamine synthetase adenylyltransferase/adenylyl-removing enzyme (983 aa).

Positions 1 to 490 (MDRKSSVTID…AHGQVFYSPV (490 aa)) are adenylyl removase. Residues 496-983 (RIPTQDLRMS…RVVDAVFWNQ (488 aa)) form an adenylyl transferase region.

It belongs to the GlnE family. It depends on Mg(2+) as a cofactor.

The catalysed reaction is [glutamine synthetase]-O(4)-(5'-adenylyl)-L-tyrosine + phosphate = [glutamine synthetase]-L-tyrosine + ADP. The enzyme catalyses [glutamine synthetase]-L-tyrosine + ATP = [glutamine synthetase]-O(4)-(5'-adenylyl)-L-tyrosine + diphosphate. In terms of biological role, involved in the regulation of glutamine synthetase GlnA, a key enzyme in the process to assimilate ammonia. When cellular nitrogen levels are high, the C-terminal adenylyl transferase (AT) inactivates GlnA by covalent transfer of an adenylyl group from ATP to specific tyrosine residue of GlnA, thus reducing its activity. Conversely, when nitrogen levels are low, the N-terminal adenylyl removase (AR) activates GlnA by removing the adenylyl group by phosphorolysis, increasing its activity. The regulatory region of GlnE binds the signal transduction protein PII (GlnB) which indicates the nitrogen status of the cell. In Cutibacterium acnes (strain DSM 16379 / KPA171202) (Propionibacterium acnes), this protein is Bifunctional glutamine synthetase adenylyltransferase/adenylyl-removing enzyme.